The sequence spans 187 residues: Small ribosomal subunit protein uS5 (187 aa).

The disordered stretch occupies residues 1–20 (MAERENRRDRRDDRSREETP). Positions 22 to 85 (FADRLVAINR…EQAKRQMIRV (64 aa)) constitute an S5 DRBM domain.

This sequence belongs to the universal ribosomal protein uS5 family. In terms of assembly, part of the 30S ribosomal subunit. Contacts proteins S4 and S8.

In terms of biological role, with S4 and S12 plays an important role in translational accuracy. Functionally, located at the back of the 30S subunit body where it stabilizes the conformation of the head with respect to the body. In Cereibacter sphaeroides (strain ATCC 17029 / ATH 2.4.9) (Rhodobacter sphaeroides), this protein is Small ribosomal subunit protein uS5.